A 315-amino-acid chain; its full sequence is tRNA dimethylallyltransferase (315 aa).

13-20 (GPTAVGKT) is an ATP binding site. 15–20 (TAVGKT) is a binding site for substrate. The interval 38–41 (DSRL) is interaction with substrate tRNA.

Belongs to the IPP transferase family. In terms of assembly, monomer. It depends on Mg(2+) as a cofactor.

The enzyme catalyses adenosine(37) in tRNA + dimethylallyl diphosphate = N(6)-dimethylallyladenosine(37) in tRNA + diphosphate. Catalyzes the transfer of a dimethylallyl group onto the adenine at position 37 in tRNAs that read codons beginning with uridine, leading to the formation of N6-(dimethylallyl)adenosine (i(6)A). The chain is tRNA dimethylallyltransferase from Herpetosiphon aurantiacus (strain ATCC 23779 / DSM 785 / 114-95).